Here is a 169-residue protein sequence, read N- to C-terminus: Nucleoside diphosphate kinase 3 (169 aa).

The ADP site is built by Lys29, Arg105, Thr111, Arg122, Val129, and Asn132. Residue His135 is the Pros-phosphohistidine intermediate of the active site.

Belongs to the NDK family. In terms of assembly, homohexamer. Requires Mg(2+) as cofactor.

The protein localises to the mitochondrion outer membrane. It is found in the cytoplasm. Its subcellular location is the cytoskeleton. It localises to the cilium basal body. The enzyme catalyses a 2'-deoxyribonucleoside 5'-diphosphate + ATP = a 2'-deoxyribonucleoside 5'-triphosphate + ADP. It carries out the reaction a ribonucleoside 5'-diphosphate + ATP = a ribonucleoside 5'-triphosphate + ADP. Functionally, catalyzes the phosphorylation of ribonucleosides and deoxyribonucleoside diphosphates, other than ATP, into the corresponding triphosphates with ATP as the major phosphate donor. The ATP gamma phosphate is transferred to the nucleoside diphosphate beta phosphate via a ping-pong mechanism, using a phosphorylated active-site intermediate. Through the catalyzed exchange of gamma-phosphate between di- and triphosphonucleosides participates in regulation of intracellular nucleotide homeostasis. Required for ciliary function during renal development. Its function is as follows. Independently of its kinase activity, facilitates mitochondrial tethering prior to membrane fusion through its direct membrane-binding and hexamerization. Implicated in repair of both single- and double-stranded breaks in DNA, independently of its kinase activity. The sequence is that of Nucleoside diphosphate kinase 3 from Danio rerio (Zebrafish).